The following is a 117-amino-acid chain: Huntingtin-interacting protein M (117 aa).

Composition is skewed to basic and acidic residues over residues 1–11 (MSEKKSQEKPC) and 83–97 (QDRE…EPSR). Disordered regions lie at residues 1–25 (MSEK…SRPE) and 74–117 (NINN…RRNG).

In terms of assembly, may interact with the N-terminus of HD.

The chain is Huntingtin-interacting protein M from Mus musculus (Mouse).